The chain runs to 120 residues: Large ribosomal subunit protein uL22 (120 aa).

Belongs to the universal ribosomal protein uL22 family. As to quaternary structure, part of the 50S ribosomal subunit.

Its function is as follows. This protein binds specifically to 23S rRNA; its binding is stimulated by other ribosomal proteins, e.g. L4, L17, and L20. It is important during the early stages of 50S assembly. It makes multiple contacts with different domains of the 23S rRNA in the assembled 50S subunit and ribosome. In terms of biological role, the globular domain of the protein is located near the polypeptide exit tunnel on the outside of the subunit, while an extended beta-hairpin is found that lines the wall of the exit tunnel in the center of the 70S ribosome. In Oenococcus oeni (strain ATCC BAA-331 / PSU-1), this protein is Large ribosomal subunit protein uL22.